Reading from the N-terminus, the 459-residue chain is Type I restriction enzyme HindI specificity subunit (459 aa).

Belongs to the type-I restriction system S methylase family. In terms of assembly, the type I restriction/modification system is composed of three polypeptides R, M and S; the restriction enzyme has stoichiometry R(2)M(2)S(1) while the methyltransferase is M(2)S(1).

The specificity (S) subunit of a type I restriction enzyme; this subunit dictates DNA sequence specificity. The M and S subunits together form a methyltransferase (MTase) that methylates adenosines in the sequence 5'-RAACN(5)TAG-3'. Methylation protects against cleavage by HindI. In the presence of the R subunit the complex can also act as an endonuclease, binding to the same target sequence but cutting the DNA some distance from this site. Whether the DNA is cut or modified depends on the methylation state of the target sequence. When the target site is unmodified, the DNA is cut. When the target site is hemimethylated, the complex acts as a maintenance MTase modifying the DNA so that both strands become methylated. After locating a non-methylated recognition site, the enzyme complex serves as a molecular motor that translocates DNA in an ATP-dependent manner until a collision occurs that triggers cleavage. The chain is Type I restriction enzyme HindI specificity subunit from Haemophilus influenzae (strain ATCC 51907 / DSM 11121 / KW20 / Rd).